An 870-amino-acid chain; its full sequence is Leucine--tRNA ligase (870 aa).

Positions 42–52 (PYPSGKLHMGH) match the 'HIGH' region motif. A 'KMSKS' region motif is present at residues 629–633 (KMSKS). K632 contributes to the ATP binding site.

This sequence belongs to the class-I aminoacyl-tRNA synthetase family.

Its subcellular location is the cytoplasm. The enzyme catalyses tRNA(Leu) + L-leucine + ATP = L-leucyl-tRNA(Leu) + AMP + diphosphate. This chain is Leucine--tRNA ligase, found in Dechloromonas aromatica (strain RCB).